The chain runs to 198 residues: Protein GrpE (198 aa).

A compositionally biased stretch (basic and acidic residues) spans 1–27 (MEERNEQVVEETKEAQTEEATIEKNSE). The segment at 1–39 (MEERNEQVVEETKEAQTEEATIEKNSEESVTEEATEETV) is disordered. Acidic residues predominate over residues 29–39 (SVTEEATEETV).

This sequence belongs to the GrpE family. Homodimer.

The protein resides in the cytoplasm. Its function is as follows. Participates actively in the response to hyperosmotic and heat shock by preventing the aggregation of stress-denatured proteins, in association with DnaK and GrpE. It is the nucleotide exchange factor for DnaK and may function as a thermosensor. Unfolded proteins bind initially to DnaJ; upon interaction with the DnaJ-bound protein, DnaK hydrolyzes its bound ATP, resulting in the formation of a stable complex. GrpE releases ADP from DnaK; ATP binding to DnaK triggers the release of the substrate protein, thus completing the reaction cycle. Several rounds of ATP-dependent interactions between DnaJ, DnaK and GrpE are required for fully efficient folding. This is Protein GrpE from Bacillus cytotoxicus (strain DSM 22905 / CIP 110041 / 391-98 / NVH 391-98).